The sequence spans 419 residues: Creatine kinase S-type, mitochondrial (419 aa).

The transit peptide at 1 to 39 (MASAFSKLLTGRNASLLFTTLGTSALTTGYLLNRQKVSA) directs the protein to the mitochondrion. The tract at residues 40–64 (DAREQHKLFPPSADYPDLRKHNNCM) is cardiolipin-binding. A Phosphagen kinase N-terminal domain is found at 46–132 (KLFPPSADYP…FDPVIKLRHN (87 aa)). In terms of domain architecture, Phosphagen kinase C-terminal spans 159–401 (YVLSSRVRTG…NYLVDCEKKL (243 aa)). ATP-binding positions include 162–166 (SSRVR) and His-225. The residue at position 255 (Tyr-255) is a Phosphotyrosine. ATP contacts are provided by residues Arg-270, Arg-326, 354–359 (RGTGGV), and Asp-369. Residue Thr-356 is modified to Phosphothreonine.

Belongs to the ATP:guanido phosphotransferase family. As to quaternary structure, exists as an octamer composed of four CKMT2 homodimers. In terms of tissue distribution, sarcomere-specific. Found only in heart and skeletal muscles.

It localises to the mitochondrion inner membrane. The enzyme catalyses creatine + ATP = N-phosphocreatine + ADP + H(+). Its function is as follows. Reversibly catalyzes the transfer of phosphate between ATP and various phosphogens (e.g. creatine phosphate). Creatine kinase isoenzymes play a central role in energy transduction in tissues with large, fluctuating energy demands, such as skeletal muscle, heart, brain and spermatozoa. The protein is Creatine kinase S-type, mitochondrial (Ckmt2) of Rattus norvegicus (Rat).